The chain runs to 139 residues: Large ribosomal subunit protein uL16 (139 aa).

This sequence belongs to the universal ribosomal protein uL16 family. Part of the 50S ribosomal subunit.

In terms of biological role, binds 23S rRNA and is also seen to make contacts with the A and possibly P site tRNAs. This chain is Large ribosomal subunit protein uL16, found in Chlorobium phaeobacteroides (strain BS1).